The primary structure comprises 287 residues: Acetyl-coenzyme A carboxylase carboxyl transferase subunit beta (287 aa).

One can recognise a CoA carboxyltransferase N-terminal domain in the interval 25–287; it reads VWTKCSACEQ…KMLNTHVIEE (263 aa). Residues cysteine 29, cysteine 32, cysteine 48, and cysteine 51 each contribute to the Zn(2+) site. A C4-type zinc finger spans residues 29–51; the sequence is CSACEQVLYRAELERNLEVCPKC.

The protein belongs to the AccD/PCCB family. As to quaternary structure, acetyl-CoA carboxylase is a heterohexamer composed of biotin carboxyl carrier protein (AccB), biotin carboxylase (AccC) and two subunits each of ACCase subunit alpha (AccA) and ACCase subunit beta (AccD). Zn(2+) serves as cofactor.

Its subcellular location is the cytoplasm. It catalyses the reaction N(6)-carboxybiotinyl-L-lysyl-[protein] + acetyl-CoA = N(6)-biotinyl-L-lysyl-[protein] + malonyl-CoA. Its pathway is lipid metabolism; malonyl-CoA biosynthesis; malonyl-CoA from acetyl-CoA: step 1/1. Component of the acetyl coenzyme A carboxylase (ACC) complex. Biotin carboxylase (BC) catalyzes the carboxylation of biotin on its carrier protein (BCCP) and then the CO(2) group is transferred by the transcarboxylase to acetyl-CoA to form malonyl-CoA. The sequence is that of Acetyl-coenzyme A carboxylase carboxyl transferase subunit beta from Aeromonas hydrophila subsp. hydrophila (strain ATCC 7966 / DSM 30187 / BCRC 13018 / CCUG 14551 / JCM 1027 / KCTC 2358 / NCIMB 9240 / NCTC 8049).